The following is a 195-amino-acid chain: Recombination protein RecR (195 aa).

The segment at 53-68 adopts a C4-type zinc-finger fold; the sequence is CTICHNLDTISPCSIC. In terms of domain architecture, Toprim spans 76–171; that stretch reads SIICVVEELG…KVTRLACGIP (96 aa).

This sequence belongs to the RecR family.

Its function is as follows. May play a role in DNA repair. It seems to be involved in an RecBC-independent recombinational process of DNA repair. It may act with RecF and RecO. The sequence is that of Recombination protein RecR from Anaplasma marginale (strain St. Maries).